The following is a 60-amino-acid chain: Potassium channel toxin alpha-KTx 3.6 (60 aa).

The N-terminal stretch at 1–22 (MKVFFAVLITLFICSMIIGIHG) is a signal peptide. 3 cysteine pairs are disulfide-bonded: Cys-29-Cys-49, Cys-35-Cys-54, and Cys-39-Cys-56. Lys-59 is modified (lysine amide).

The protein belongs to the short scorpion toxin superfamily. Potassium channel inhibitor family. Alpha-KTx 03 subfamily. In terms of tissue distribution, expressed by the venom gland.

The protein resides in the secreted. Functionally, blocks voltage-gated potassium channels. At 2 uM, blocks rat Kv1.1/KCNA1 and Kv1.3/KCNA3, has a strong effect on rat Kv1.2/KCNA2 and Kv1.6/KCNA6 as well as a moderate effect on Shaker IR. The polypeptide is Potassium channel toxin alpha-KTx 3.6 (Olivierus martensii (Manchurian scorpion)).